A 67-amino-acid chain; its full sequence is Small ribosomal subunit protein eS17 (67 aa).

The protein belongs to the eukaryotic ribosomal protein eS17 family.

The polypeptide is Small ribosomal subunit protein eS17 (Pyrococcus horikoshii (strain ATCC 700860 / DSM 12428 / JCM 9974 / NBRC 100139 / OT-3)).